Reading from the N-terminus, the 216-residue chain is 3-isopropylmalate dehydratase small subunit (216 aa).

This sequence belongs to the LeuD family. LeuD type 1 subfamily. As to quaternary structure, heterodimer of LeuC and LeuD.

The catalysed reaction is (2R,3S)-3-isopropylmalate = (2S)-2-isopropylmalate. Its pathway is amino-acid biosynthesis; L-leucine biosynthesis; L-leucine from 3-methyl-2-oxobutanoate: step 2/4. Its function is as follows. Catalyzes the isomerization between 2-isopropylmalate and 3-isopropylmalate, via the formation of 2-isopropylmaleate. The protein is 3-isopropylmalate dehydratase small subunit of Psychrobacter sp. (strain PRwf-1).